Reading from the N-terminus, the 138-residue chain is ATP synthase epsilon chain (138 aa).

This sequence belongs to the ATPase epsilon chain family. As to quaternary structure, F-type ATPases have 2 components, CF(1) - the catalytic core - and CF(0) - the membrane proton channel. CF(1) has five subunits: alpha(3), beta(3), gamma(1), delta(1), epsilon(1). CF(0) has three main subunits: a, b and c.

The protein localises to the cell inner membrane. Its function is as follows. Produces ATP from ADP in the presence of a proton gradient across the membrane. This Polaromonas naphthalenivorans (strain CJ2) protein is ATP synthase epsilon chain.